The primary structure comprises 104 residues: Large ribosomal subunit protein bL21 (104 aa).

It belongs to the bacterial ribosomal protein bL21 family. Part of the 50S ribosomal subunit. Contacts protein L20.

Its function is as follows. This protein binds to 23S rRNA in the presence of protein L20. This is Large ribosomal subunit protein bL21 from Rhodopirellula baltica (strain DSM 10527 / NCIMB 13988 / SH1).